A 487-amino-acid polypeptide reads, in one-letter code: Beta-barrel assembly-enhancing protease (487 aa).

An N-terminal signal peptide occupies residues 1-27; that stretch reads MFRQLKKNLVATLIAAMTIGQVAPAFA. Histidine 136 lines the Zn(2+) pocket. Glutamate 137 is a catalytic residue. Zn(2+) contacts are provided by histidine 140 and glutamate 201. Residue aspartate 205 is the Proton donor of the active site. TPR repeat units follow at residues 309-342, 344-376, 377-409, and 427-460; these read RAAQ…EPGN, WYLD…RTNP, VLQL…NKDD, and DQEL…VKLG.

The protein belongs to the peptidase M48 family. BepA subfamily. Zn(2+) is required as a cofactor.

It is found in the periplasm. Its function is as follows. Functions both as a chaperone and a metalloprotease. Maintains the integrity of the outer membrane by promoting either the assembly or the elimination of outer membrane proteins, depending on their folding state. In Escherichia coli O157:H7, this protein is Beta-barrel assembly-enhancing protease.